Reading from the N-terminus, the 466-residue chain is Alpha-galacturonidase (466 aa).

11 to 78 (VKIAYIGGGS…GKWNYETANT (68 aa)) contacts NAD(+). Substrate is bound at residue Asn157. Residue Cys179 coordinates Mn(2+). His180 (proton donor) is an active-site residue. His216 serves as a coordination point for Mn(2+).

Belongs to the glycosyl hydrolase 4 family. In terms of assembly, homotetramer. NAD(+) is required as a cofactor. It depends on Mn(2+) as a cofactor.

It carries out the reaction [(1-&gt;4)-alpha-D-galacturonosyl](n) + H2O = alpha-D-galacturonate + [(1-&gt;4)-alpha-D-galacturonosyl](n-1). In terms of biological role, alpha-galacturonidase able to catalyze the hydrolysis of the chromogenic substrate p-nitrophenyl-alpha-D-galacturonic acid (pNPalphaGalUA). It is probable that alpha-1,4-di-galacturonate (GalUA(2)) is the naturally occurring substrate. This chain is Alpha-galacturonidase, found in Lachnoclostridium phytofermentans (strain ATCC 700394 / DSM 18823 / ISDg) (Clostridium phytofermentans).